We begin with the raw amino-acid sequence, 548 residues long: Membrane protein insertase YidC (548 aa).

Residues Asn-6 to Asp-26 traverse the membrane as a helical segment. The disordered stretch occupies residues Asn-28–Ser-55. The span at Gln-30 to Gln-50 shows a compositional bias: low complexity. 4 consecutive transmembrane segments (helical) span residues Phe-350–Tyr-370, Leu-420–Leu-440, Leu-458–Ile-478, and Pro-499–Val-519.

This sequence belongs to the OXA1/ALB3/YidC family. Type 1 subfamily. Interacts with the Sec translocase complex via SecD. Specifically interacts with transmembrane segments of nascent integral membrane proteins during membrane integration.

Its subcellular location is the cell inner membrane. Functionally, required for the insertion and/or proper folding and/or complex formation of integral membrane proteins into the membrane. Involved in integration of membrane proteins that insert both dependently and independently of the Sec translocase complex, as well as at least some lipoproteins. Aids folding of multispanning membrane proteins. This Escherichia coli O139:H28 (strain E24377A / ETEC) protein is Membrane protein insertase YidC.